Reading from the N-terminus, the 494-residue chain is ATP synthase subunit alpha 1 (494 aa).

This sequence belongs to the ATPase alpha/beta chains family. F-type ATPases have 2 components, CF(1) - the catalytic core - and CF(0) - the membrane proton channel. CF(1) has five subunits: alpha(3), beta(3), gamma(1), delta(1), epsilon(1). CF(0) has three main subunits: a(1), b(2) and c(9-12). The alpha and beta chains form an alternating ring which encloses part of the gamma chain. CF(1) is attached to CF(0) by a central stalk formed by the gamma and epsilon chains, while a peripheral stalk is formed by the delta and b chains.

It is found in the cell inner membrane. It carries out the reaction ATP + H2O + 4 H(+)(in) = ADP + phosphate + 5 H(+)(out). Functionally, produces ATP from ADP in the presence of a proton gradient across the membrane. The alpha chain is a regulatory subunit. In Hahella chejuensis (strain KCTC 2396), this protein is ATP synthase subunit alpha 1.